The chain runs to 1266 residues: Neuronal-glial cell adhesion molecule (1266 aa).

The first 20 residues, 1–20 (MALPMVGLLLLLLLGGPGAA), serve as a signal peptide directing secretion. Residues 21–1130 (ITIPPEYGAH…PQPGGGVCTK (1110 aa)) lie on the Extracellular side of the membrane. Ig-like C2-type domains are found at residues 36–128 (PELT…NVIA), 135–221 (PKEK…KEPL), 236–322 (PRLL…HSVT), 327–413 (PYWV…AFLH), 418–506 (PLRM…ALLE), and 510–597 (PTRI…AQLR). Disulfide bonds link C58-C110, C154-C205, C260-C306, and C348-C397. An N-linked (GlcNAc...) asparagine glycan is attached at N97. N288, N390, N434, N472, and N498 each carry an N-linked (GlcNAc...) asparagine glycan. A disulfide bond links C441 and C490. A disulfide bond links C532 and C581. Fibronectin type-III domains follow at residues 603-698 (PSRD…TPPA), 700-804 (PERN…SGED), 809-930 (YPEN…TPEG), 934-1021 (PPEE…TKPE), and 1022-1118 (PPSP…TNGT). The disordered stretch occupies residues 685–710 (EHHAPSAPIETPPAAPERNPGGVHGE). 2 N-linked (GlcNAc...) asparagine glycosylation sites follow: N712 and N819. The disordered stretch occupies residues 857-882 (SRRQAPPDPPQIPQSPAEDPPPFPPV). A compositionally biased stretch (pro residues) spans 862 to 881 (PPDPPQIPQSPAEDPPPFPP). The short motif at 914-916 (RGD) is the Cell attachment site element. Residues 1004-1025 (STPRERPALQTVGSTKPEPPSP) are disordered. 4 N-linked (GlcNAc...) asparagine glycosylation sites follow: N1061, N1075, N1100, and N1116. The helical transmembrane segment at 1131–1153 (GWFIGFVSSVVLLLLILLILCFI) threads the bilayer. The Cytoplasmic segment spans residues 1154–1266 (KRSKGGKYSV…ASPCAGPPLD (113 aa)). Residues 1163 to 1195 (VKDKEDTQVDSEARPMKDETFGEYRSLESEAEK) show a composition bias toward basic and acidic residues. A disordered region spans residues 1163-1266 (VKDKEDTQVD…ASPCAGPPLD (104 aa)). Residues 1199 to 1211 (SGSGAGSGVGSPG) are compositionally biased toward gly residues.

The protein belongs to the immunoglobulin superfamily. L1/neurofascin/NgCAM family. As to quaternary structure, binds to itself and to axonin 1. As to expression, brain.

The protein resides in the cell membrane. Its function is as follows. Mediates the adhesion of neurons to neurons and neurons to glia. It is involved in neuronal migration, neurite fasciculation and outgrowth. This is Neuronal-glial cell adhesion molecule from Gallus gallus (Chicken).